A 190-amino-acid polypeptide reads, in one-letter code: Probable GTP-binding protein EngB (190 aa).

The 169-residue stretch at 22-190 (VKREVAFAGR…LNELLKILIP (169 aa)) folds into the EngB-type G domain. GTP is bound by residues 30-37 (GRSNVGKS), 56-60 (GKTRS), 74-77 (DLPG), 141-144 (TKTD), and 173-175 (FSA). Positions 37 and 58 each coordinate Mg(2+).

The protein belongs to the TRAFAC class TrmE-Era-EngA-EngB-Septin-like GTPase superfamily. EngB GTPase family. It depends on Mg(2+) as a cofactor.

Its function is as follows. Necessary for normal cell division and for the maintenance of normal septation. This Kosmotoga olearia (strain ATCC BAA-1733 / DSM 21960 / TBF 19.5.1) protein is Probable GTP-binding protein EngB.